Here is a 477-residue protein sequence, read N- to C-terminus: GH30 family xylanase (477 aa).

The signal sequence occupies residues 1-19 (MYSLLIALLCAGTAVDAQA). Residues asparagine 194, asparagine 237, and asparagine 331 are each glycosylated (N-linked (GlcNAc...) asparagine).

Belongs to the glycosyl hydrolase 30 family.

It localises to the secreted. With respect to regulation, activity is enhanced by 10 mM Co(2+), Cu 2(2+) and Mn(2+) to levels as high as 44%. Partial inhibition of activity from 5 to 15% is observed in the presence of the following compouinds at a centration of 10 mM (from higher inhibition to lower): EDTA &gt; Mg(2+) &gt; urea, Zn(2+) &gt; Fe(3+). Xylanase exhibiting endo- and exo-xylanase activity. Shows the highest activity toward beechwood glucuronoxylan, which consists of a beta-1,4-linked xylose backbone decorated with the methylated form of D-glucuronic acid (MeGlcA) attached directly to the main chain at xylose C2. Also acts against wheat arabinoxylan, a xylan without MeGlcA substituents along the main chain, but the xylanase activity is about two orders of magnitude lower than that achieved in the case of beechwood xylan. Shows no activity against carob galactomannan, konjac glucomannan, or barley beta-glucan. The recombinant xylanase also exhibits an exo-activity by releasing processively disaccharide units from the non-reducing end of linear and decorated xylooligosaccharides (XOS). This chain is GH30 family xylanase, found in Thermothelomyces thermophilus (strain ATCC 42464 / BCRC 31852 / DSM 1799) (Sporotrichum thermophile).